Here is a 244-residue protein sequence, read N- to C-terminus: 5-oxoprolinase subunit A (244 aa).

It belongs to the LamB/PxpA family. Forms a complex composed of PxpA, PxpB and PxpC.

The enzyme catalyses 5-oxo-L-proline + ATP + 2 H2O = L-glutamate + ADP + phosphate + H(+). In terms of biological role, catalyzes the cleavage of 5-oxoproline to form L-glutamate coupled to the hydrolysis of ATP to ADP and inorganic phosphate. This chain is 5-oxoprolinase subunit A, found in Salmonella arizonae (strain ATCC BAA-731 / CDC346-86 / RSK2980).